Here is a 299-residue protein sequence, read N- to C-terminus: Probable transport accessory protein MmpS3 (299 aa).

Residues methionine 1–proline 72 are disordered. Residues valine 101–valine 121 form a helical membrane-spanning segment. Residues lysine 128 to proline 139 are compositionally biased toward polar residues. Residues lysine 128–glutamine 213 form a disordered region. Pro residues predominate over residues proline 150 to threonine 163. Residues glutamate 164–valine 176 are compositionally biased toward low complexity. Positions threonine 177–alanine 193 are enriched in pro residues.

It belongs to the MmpS family.

It localises to the cell membrane. In Mycobacterium tuberculosis (strain CDC 1551 / Oshkosh), this protein is Probable transport accessory protein MmpS3 (mmpS3).